The chain runs to 250 residues: Probable replication-associated protein repA2 (250 aa).

Belongs to the IncFII RepA family.

This protein is essential for plasmid replication; it is involved in copy control functions. This is Probable replication-associated protein repA2 (repA2) from Buchnera aphidicola subsp. Schizaphis graminum (strain Sg).